The primary structure comprises 98 residues: Feather keratin 4 (98 aa).

Ser-2 carries the N-acetylserine modification.

Belongs to the avian keratin family. As to quaternary structure, the avian keratins (F-ker, S-ker, C-ker and B-ker) are a complex mixture of very similar polypeptides.

The polypeptide is Feather keratin 4 (Gallus gallus (Chicken)).